Reading from the N-terminus, the 407-residue chain is Lysine racemase (407 aa).

Positions 1-18 are cleaved as a signal peptide; it reads MSLGIRYLALLPLFVITA. A lipid anchor (N-palmitoyl cysteine) is attached at C19. C19 carries S-diacylglycerol cysteine lipidation. C70 and C96 are disulfide-bonded. K74 functions as the Proton acceptor in the catalytic mechanism. K74 bears the N6-(pyridoxal phosphate)lysine mark. R173 is a binding site for substrate. The active-site Proton acceptor is Y299. M347 lines the substrate pocket.

The protein belongs to the alanine racemase family. Bsr subfamily. In terms of assembly, forms a head-to-tail homodimer in the structure. The cofactor is pyridoxal 5'-phosphate.

Its subcellular location is the cell membrane. The protein resides in the periplasm. It carries out the reaction L-lysine = D-lysine. The catalysed reaction is L-arginine = D-arginine. The racemization activity of Lyr is completely inhibited by hydroxylamine. Functionally, amino-acid racemase that catalyzes the interconversion of L-lysine and D-lysine. To a lesser extent, is also able to interconvert arginine enantiomers. Cannot use methionine, asparagine, alanine, leucine, glutamine, phenylalanine and histidine as substrates. The polypeptide is Lysine racemase (Proteus mirabilis).